The following is a 449-amino-acid chain: MSPQTETKASVGFKAGVKDYKLTYYTPDYETKDTDILAAFRVTPQPGVPPEEAGAAVAAESSTGTWTAVWTDGLTSLDRYKGRCYHIEPVAGEETQFIAYVAYPLDLFEEGSVTNMFTSIVGNAFGFKALRALRLEDLRIPTTYSKTFQGPPHGIQVERDKLNKYGRPLLGCTIKPKLGLSAKNYGRAVYECLRGGLDFTKDDENVNSQPFMRWRDRFLFCAEALYKAQAETGEIKGHYLNATAGTCEEMMKRAVFARELGVPIVMHDYLTGGFTANTSLAHYCRDNGLLLHIHRAMHAVIDRQKNHGMHFRVLAKALRMSGGDHIHAGTVVGKLEGERDITLGFVDLLRDDFIEKDRSRGIYFTQDWVSLPGVLPVASGGIHVWHMPALTEIFGDDAVLQFGGGTLGHPWGNAPGAVANRVALEACVQARNEGRDLAREGNEIIREAS.

Residues 1–2 (MS) constitute a propeptide that is removed on maturation. Pro3 bears the N-acetylproline mark. Residue Lys14 is modified to N6,N6,N6-trimethyllysine. Positions 123 and 173 each coordinate substrate. Catalysis depends on Lys175, which acts as the Proton acceptor. Position 177 (Lys177) interacts with substrate. Mg(2+) is bound by residues Lys201, Asp203, and Glu204. Lys201 is modified (N6-carboxylysine). Catalysis depends on His294, which acts as the Proton acceptor. Arg295, His327, and Ser379 together coordinate substrate.

It belongs to the RuBisCO large chain family. Type I subfamily. Heterohexadecamer of 8 large chains and 8 small chains; disulfide-linked. The disulfide link is formed within the large subunit homodimers. Mg(2+) serves as cofactor. In terms of processing, the disulfide bond which can form in the large chain dimeric partners within the hexadecamer appears to be associated with oxidative stress and protein turnover.

Its subcellular location is the plastid. It is found in the chloroplast. It catalyses the reaction 2 (2R)-3-phosphoglycerate + 2 H(+) = D-ribulose 1,5-bisphosphate + CO2 + H2O. The catalysed reaction is D-ribulose 1,5-bisphosphate + O2 = 2-phosphoglycolate + (2R)-3-phosphoglycerate + 2 H(+). Functionally, ruBisCO catalyzes two reactions: the carboxylation of D-ribulose 1,5-bisphosphate, the primary event in carbon dioxide fixation, as well as the oxidative fragmentation of the pentose substrate in the photorespiration process. Both reactions occur simultaneously and in competition at the same active site. The protein is Ribulose bisphosphate carboxylase large chain of Hippocratea richardiana.